Consider the following 418-residue polypeptide: Serine hydroxymethyltransferase (418 aa).

Residues leucine 121 and 125–127 (GHL) each bind (6S)-5,6,7,8-tetrahydrofolate. Lysine 230 is modified (N6-(pyridoxal phosphate)lysine). A (6S)-5,6,7,8-tetrahydrofolate-binding site is contributed by 356 to 358 (SPF).

It belongs to the SHMT family. Homodimer. It depends on pyridoxal 5'-phosphate as a cofactor.

It is found in the cytoplasm. The catalysed reaction is (6R)-5,10-methylene-5,6,7,8-tetrahydrofolate + glycine + H2O = (6S)-5,6,7,8-tetrahydrofolate + L-serine. Its pathway is one-carbon metabolism; tetrahydrofolate interconversion. It functions in the pathway amino-acid biosynthesis; glycine biosynthesis; glycine from L-serine: step 1/1. Functionally, catalyzes the reversible interconversion of serine and glycine with tetrahydrofolate (THF) serving as the one-carbon carrier. This reaction serves as the major source of one-carbon groups required for the biosynthesis of purines, thymidylate, methionine, and other important biomolecules. Also exhibits THF-independent aldolase activity toward beta-hydroxyamino acids, producing glycine and aldehydes, via a retro-aldol mechanism. This Shewanella woodyi (strain ATCC 51908 / MS32) protein is Serine hydroxymethyltransferase.